Here is a 546-residue protein sequence, read N- to C-terminus: Zinc finger and BTB domain-containing protein 7A (546 aa).

The BTB domain occupies 34–101 (CDVVILVEGQ…AYTATLTVST (68 aa)). Residues 189 to 288 (QEDEEEPDCN…SFVPTGAEAE (100 aa)) form a disordered region. 3 C2H2-type zinc fingers span residues 359 to 381 (QKCP…IRTH), 387 to 409 (YECN…MRKH), and 415 to 437 (YLCQ…MRVH). The segment at 443–467 (YQCDSCFKTFVRSDHLHRHLKKDGC) adopts a C2H2-type 4; atypical zinc-finger fold. A disordered region spans residues 463–546 (KKDGCNGIPS…AAEGSAPGPS (84 aa)). Residues 534-546 (AGGAAEGSAPGPS) show a composition bias toward low complexity.

It localises to the nucleus. In terms of biological role, transcription factor that represses the transcription of a wide range of genes involved in cell proliferation and differentiation. Directly and specifically binds to the consensus sequence 5'-[GA][CA]GACCCCCCCCC-3' and represses transcription both by regulating the organization of chromatin and through the direct recruitment of transcription factors to gene regulatory regions. May also play a role, independently of its transcriptional activity, in double-strand break repair via classical non-homologous end joining/cNHEJ and in alternative splicing. This chain is Zinc finger and BTB domain-containing protein 7A, found in Gallus gallus (Chicken).